The primary structure comprises 173 residues: MPRSNRNDNFIDKSFTVMADLIVKLLPINARAKEAYVYYRDGLSAQNDGDYAEALENYEESLKLEENAIDRGETLKNIAIIYMSNGEEERALETYQKALDENPKQPSCLKNMGLIYEKRGRTAEEEGRRDDADGWFDQAANVWTQAVRLNPGGYLDIENWLKSTGRSNVDVYF.

TPR repeat units lie at residues 35–68 (AYVY…EENA), 72–105 (GETL…NPKQ), and 120–153 (GRTA…NPGG).

Belongs to the Ycf3 family.

Its subcellular location is the cellular thylakoid membrane. Its function is as follows. Essential for the assembly of the photosystem I (PSI) complex. May act as a chaperone-like factor to guide the assembly of the PSI subunits. The chain is Photosystem I assembly protein Ycf3 from Synechococcus sp. (strain CC9311).